The chain runs to 266 residues: Elongation factor Ts (266 aa).

Positions 80–83 are involved in Mg(2+) ion dislocation from EF-Tu; the sequence is TDFV.

This sequence belongs to the EF-Ts family.

Its subcellular location is the cytoplasm. Associates with the EF-Tu.GDP complex and induces the exchange of GDP to GTP. It remains bound to the aminoacyl-tRNA.EF-Tu.GTP complex up to the GTP hydrolysis stage on the ribosome. The chain is Elongation factor Ts from Buchnera aphidicola subsp. Baizongia pistaciae (strain Bp).